Reading from the N-terminus, the 379-residue chain is Chaperone protein DnaJ (379 aa).

The J domain occupies 7–72 (DYYEVLGVDK…KKRSMYDQFG (66 aa)). The segment at 147–225 (GKKAELSYTR…CGGNGLERKK (79 aa)) adopts a CR-type zinc-finger fold. Zn(2+) is bound by residues C160, C163, C177, C180, C199, C202, C213, and C216. CXXCXGXG motif repeat units lie at residues 160-167 (CSECHGTG), 177-184 (CPDCKGTG), 199-206 (CPTCGGEG), and 213-220 (CKKCGGNG).

This sequence belongs to the DnaJ family. As to quaternary structure, homodimer. It depends on Zn(2+) as a cofactor.

Its subcellular location is the cytoplasm. Its function is as follows. Participates actively in the response to hyperosmotic and heat shock by preventing the aggregation of stress-denatured proteins and by disaggregating proteins, also in an autonomous, DnaK-independent fashion. Unfolded proteins bind initially to DnaJ; upon interaction with the DnaJ-bound protein, DnaK hydrolyzes its bound ATP, resulting in the formation of a stable complex. GrpE releases ADP from DnaK; ATP binding to DnaK triggers the release of the substrate protein, thus completing the reaction cycle. Several rounds of ATP-dependent interactions between DnaJ, DnaK and GrpE are required for fully efficient folding. Also involved, together with DnaK and GrpE, in the DNA replication of plasmids through activation of initiation proteins. This chain is Chaperone protein DnaJ, found in Treponema denticola (strain ATCC 35405 / DSM 14222 / CIP 103919 / JCM 8153 / KCTC 15104).